Consider the following 260-residue polypeptide: 3-deoxy-manno-octulosonate cytidylyltransferase (260 aa).

It belongs to the KdsB family.

Its subcellular location is the cytoplasm. The enzyme catalyses 3-deoxy-alpha-D-manno-oct-2-ulosonate + CTP = CMP-3-deoxy-beta-D-manno-octulosonate + diphosphate. The protein operates within nucleotide-sugar biosynthesis; CMP-3-deoxy-D-manno-octulosonate biosynthesis; CMP-3-deoxy-D-manno-octulosonate from 3-deoxy-D-manno-octulosonate and CTP: step 1/1. It functions in the pathway bacterial outer membrane biogenesis; lipopolysaccharide biosynthesis. In terms of biological role, activates KDO (a required 8-carbon sugar) for incorporation into bacterial lipopolysaccharide in Gram-negative bacteria. This chain is 3-deoxy-manno-octulosonate cytidylyltransferase, found in Polaromonas naphthalenivorans (strain CJ2).